Consider the following 219-residue polypeptide: MEAITTNGITLRRTVAAVQGEDALRAMGERIAGALGPAVTEWAITRGELTLVVQGSDIVYALTYLRDEPACAFRCFIDICGVDYPQRARRFDVVYHLLSLRHNMRVRVKVQTDAATPVPSAIPVFPAANWYERETYDLYGILFSGHPDLRRLLTDYGFEGHPLRKDFPLTGFVEVRYDQDEARVVYEPVKLTQEFRNFDFLSPWEGTDYVLPGDEKTSS.

The protein belongs to the complex I 30 kDa subunit family. As to quaternary structure, NDH-1 is composed of 14 different subunits. Subunits NuoB, C, D, E, F, and G constitute the peripheral sector of the complex.

It is found in the cell inner membrane. It catalyses the reaction a quinone + NADH + 5 H(+)(in) = a quinol + NAD(+) + 4 H(+)(out). Functionally, NDH-1 shuttles electrons from NADH, via FMN and iron-sulfur (Fe-S) centers, to quinones in the respiratory chain. The immediate electron acceptor for the enzyme in this species is believed to be ubiquinone. Couples the redox reaction to proton translocation (for every two electrons transferred, four hydrogen ions are translocated across the cytoplasmic membrane), and thus conserves the redox energy in a proton gradient. The sequence is that of NADH-quinone oxidoreductase subunit C from Methylorubrum extorquens (strain PA1) (Methylobacterium extorquens).